The following is a 200-amino-acid chain: Small ribosomal subunit protein uS4c (200 aa).

Residues 88–148 (IRLDNTIFNL…PKSYYIFKLC (61 aa)) form the S4 RNA-binding domain.

The protein belongs to the universal ribosomal protein uS4 family. In terms of assembly, part of the 30S ribosomal subunit.

The protein localises to the plastid. Its subcellular location is the apicoplast. In terms of biological role, one of the primary rRNA binding proteins, it binds directly to 16S rRNA where it nucleates assembly of the body of the 30S subunit. This Eimeria tenella (Coccidian parasite) protein is Small ribosomal subunit protein uS4c (rps4).